A 442-amino-acid chain; its full sequence is tRNA pseudouridine(38/39) synthase (442 aa).

The active-site Nucleophile is aspartate 151. Tyrosine 222 serves as a coordination point for substrate.

It belongs to the tRNA pseudouridine synthase TruA family.

The protein localises to the nucleus. The enzyme catalyses uridine(38/39) in tRNA = pseudouridine(38/39) in tRNA. Its function is as follows. Formation of pseudouridines at positions 38 and 39 in the anticodon stem and loop of transfer RNAs. In Saccharomyces cerevisiae (strain ATCC 204508 / S288c) (Baker's yeast), this protein is tRNA pseudouridine(38/39) synthase (DEG1).